The primary structure comprises 213 residues: Small ribosomal subunit protein uS4 (213 aa).

A disordered region spans residues 16 to 53 (GTDLGLKSGVKPYDVKTKKSARPPGQHGVSRNKSSEYS). Residues 44 to 53 (VSRNKSSEYS) show a composition bias toward polar residues. The S4 RNA-binding domain occupies 97–163 (SRLDNVVYRM…EKSREQLRIK (67 aa)).

Belongs to the universal ribosomal protein uS4 family. Part of the 30S ribosomal subunit. Contacts protein S5. The interaction surface between S4 and S5 is involved in control of translational fidelity.

One of the primary rRNA binding proteins, it binds directly to 16S rRNA where it nucleates assembly of the body of the 30S subunit. Its function is as follows. With S5 and S12 plays an important role in translational accuracy. This is Small ribosomal subunit protein uS4 from Psychrobacter arcticus (strain DSM 17307 / VKM B-2377 / 273-4).